The primary structure comprises 256 residues: tRNA (guanine-N(7)-)-methyltransferase (256 aa).

The segment at methionine 1 to alanine 25 is disordered. S-adenosyl-L-methionine-binding positions include glycine 79, glutamate 102 to isoleucine 103, asparagine 137 to alanine 138, and leucine 157. Aspartate 160 is a catalytic residue. Serine 235–glutamate 237 serves as a coordination point for S-adenosyl-L-methionine.

This sequence belongs to the class I-like SAM-binding methyltransferase superfamily. TrmB family.

It localises to the nucleus. It catalyses the reaction guanosine(46) in tRNA + S-adenosyl-L-methionine = N(7)-methylguanosine(46) in tRNA + S-adenosyl-L-homocysteine. It functions in the pathway tRNA modification; N(7)-methylguanine-tRNA biosynthesis. Catalyzes the formation of N(7)-methylguanine at position 46 (m7G46) in tRNA. This is tRNA (guanine-N(7)-)-methyltransferase from Drosophila simulans (Fruit fly).